The sequence spans 1177 residues: Lysylphosphatidylglycerol biosynthesis bifunctional protein LysX (1177 aa).

Disordered stretches follow at residues 1–40 and 61–85; these read MRRAGRSRQFSSVEEAFSTSAARPGRRGRRSGRENTAKFV and VTLASPGSRSGSGPRSGPRLGPANR. The interval 1-676 is phosphatidylglycerol lysyltransferase; the sequence is MRRAGRSRQF…LLHHDGSAPD (676 aa). Positions 8–21 are enriched in polar residues; it reads RQFSSVEEAFSTSA. Positions 65–82 are enriched in low complexity; the sequence is SPGSRSGSGPRSGPRLGP. 6 consecutive transmembrane segments (helical) span residues 93–113, 135–155, 159–179, 189–209, 227–247, and 281–301; these read VPAAAGWTVGVIATVSLLGSV, FPDTSIAWSFVLALLAAALTA, IAWLLLLGNMILAAALNVADI, IFGENLGFAVHIVAIVLLVLA, AVLVAGDVVGILVSWGLVELF, and VFLNAIFGLFGALALIMATIV. A disordered region spans residues 673–693; sequence SAPDVSGLRPERTDAEEARSR. The interval 677 to 1177 is lysine--tRNA ligase; the sequence is VSGLRPERTD…TLPFPLAKPH (501 aa). A compositionally biased stretch (basic and acidic residues) spans 681-693; it reads RPERTDAEEARSR. Positions 1089 and 1096 each coordinate Mg(2+).

The protein in the N-terminal section; belongs to the LPG synthetase family. This sequence in the C-terminal section; belongs to the class-II aminoacyl-tRNA synthetase family. Requires Mg(2+) as cofactor.

The protein resides in the cell membrane. It catalyses the reaction tRNA(Lys) + L-lysine + ATP = L-lysyl-tRNA(Lys) + AMP + diphosphate. The enzyme catalyses L-lysyl-tRNA(Lys) + a 1,2-diacyl-sn-glycero-3-phospho-(1'-sn-glycerol) = a 1,2-diacyl-sn-glycero-3-phospho-1'-(3'-O-L-lysyl)-sn-glycerol + tRNA(Lys). In terms of biological role, catalyzes the production of L-lysyl-tRNA(Lys)transfer and the transfer of a lysyl group from L-lysyl-tRNA(Lys) to membrane-bound phosphatidylglycerol (PG), which produces lysylphosphatidylglycerol (LPG), one of the components of the bacterial membrane with a positive net charge. LPG synthesis contributes to the resistance to cationic antimicrobial peptides (CAMPs) and likely protects M.tuberculosis against the CAMPs produced by competiting microorganisms (bacteriocins). In fact, the modification of anionic phosphatidylglycerol with positively charged L-lysine results in repulsion of the peptides. The protein is Lysylphosphatidylglycerol biosynthesis bifunctional protein LysX (lysX) of Mycobacterium avium (strain 104).